The primary structure comprises 429 residues: Serine hydroxymethyltransferase (429 aa).

(6S)-5,6,7,8-tetrahydrofolate is bound by residues Leu-128 and 132–134 (GHL). At Lys-237 the chain carries N6-(pyridoxal phosphate)lysine.

This sequence belongs to the SHMT family. Homodimer. It depends on pyridoxal 5'-phosphate as a cofactor.

It is found in the cytoplasm. It carries out the reaction (6R)-5,10-methylene-5,6,7,8-tetrahydrofolate + glycine + H2O = (6S)-5,6,7,8-tetrahydrofolate + L-serine. Its pathway is one-carbon metabolism; tetrahydrofolate interconversion. It participates in amino-acid biosynthesis; glycine biosynthesis; glycine from L-serine: step 1/1. Functionally, catalyzes the reversible interconversion of serine and glycine with tetrahydrofolate (THF) serving as the one-carbon carrier. This reaction serves as the major source of one-carbon groups required for the biosynthesis of purines, thymidylate, methionine, and other important biomolecules. Also exhibits THF-independent aldolase activity toward beta-hydroxyamino acids, producing glycine and aldehydes, via a retro-aldol mechanism. This chain is Serine hydroxymethyltransferase, found in Caulobacter vibrioides (strain ATCC 19089 / CIP 103742 / CB 15) (Caulobacter crescentus).